A 291-amino-acid polypeptide reads, in one-letter code: tRNA pseudouridine synthase B (291 aa).

The active-site Nucleophile is Asp41.

The protein belongs to the pseudouridine synthase TruB family. Type 1 subfamily.

It catalyses the reaction uridine(55) in tRNA = pseudouridine(55) in tRNA. In terms of biological role, responsible for synthesis of pseudouridine from uracil-55 in the psi GC loop of transfer RNAs. The sequence is that of tRNA pseudouridine synthase B from Parasynechococcus marenigrum (strain WH8102).